We begin with the raw amino-acid sequence, 423 residues long: Gamma-glutamyl phosphate reductase (423 aa).

Belongs to the gamma-glutamyl phosphate reductase family.

It localises to the cytoplasm. The catalysed reaction is L-glutamate 5-semialdehyde + phosphate + NADP(+) = L-glutamyl 5-phosphate + NADPH + H(+). Its pathway is amino-acid biosynthesis; L-proline biosynthesis; L-glutamate 5-semialdehyde from L-glutamate: step 2/2. Catalyzes the NADPH-dependent reduction of L-glutamate 5-phosphate into L-glutamate 5-semialdehyde and phosphate. The product spontaneously undergoes cyclization to form 1-pyrroline-5-carboxylate. The protein is Gamma-glutamyl phosphate reductase of Burkholderia orbicola (strain MC0-3).